The following is a 595-amino-acid chain: Torsin-1A-interacting protein 1 (595 aa).

The tract at residues 1–221 (MAGERWQAEG…GNTKTNEREA (221 aa)) is disordered. The Nuclear portion of the chain corresponds to 1 to 351 (MAGERWQAEG…NEPSVKIKWW (351 aa)). Positions 24–38 (PIREGRRRLDPRNGD) are enriched in basic and acidic residues. A Phosphoserine modification is found at S60. Composition is skewed to basic and acidic residues over residues 70 to 101 (FEPR…EVRE) and 115 to 132 (RAQE…RLEQ). Positions 133–143 (HSQQPQLSPAT) are enriched in polar residues. Phosphoserine is present on residues S134, S140, S151, S153, S154, and S155. The span at 204–215 (LDSTYQTNGNTK) shows a compositional bias: polar residues. The residue at position 235 (T235) is a Phosphothreonine. A phosphoserine mark is found at S241, S244, and S255. 2 disordered regions span residues 250-286 (ARSS…PAHE) and 319-340 (IQKS…AIHH). The segment covering 251 to 262 (RSSDSLESRDEA) has biased composition (basic and acidic residues). The span at 319-335 (IQKSNFGNQSPSTSRPQ) shows a compositional bias: polar residues. Residue K321 forms a Glycyl lysine isopeptide (Lys-Gly) (interchain with G-Cter in SUMO2) linkage. S328 bears the Phosphoserine mark. Residues 352–372 (LLGLVAILAVGLFWFFHTPAV) form a helical membrane-spanning segment. Positions 368-595 (HTPAVETTAV…ENTLKAGSCL (228 aa)) are interaction with TOR1A. A coiled-coil region spans residues 373 to 400 (ETTAVQEFQNQMKQLQSKYQSQNEKLWK). Topologically, residues 373–595 (ETTAVQEFQN…ENTLKAGSCL (223 aa)) are perinuclear space. The N-linked (GlcNAc...) asparagine glycan is linked to N411.

It belongs to the TOR1AIP family. In terms of assembly, interacts with ATP1B4. Interacts with TOR1A (ATP-bound). Interacts with TOR1B, TOR2A and TOR3A. Interacts with VIM. Expressed in the spinal cord and liver (at protein level).

It localises to the nucleus inner membrane. Its function is as follows. Required for nuclear membrane integrity. Induces TOR1A and TOR1B ATPase activity and is required for their location on the nuclear membrane. Binds to A- and B-type lamins. Possible role in membrane attachment and assembly of the nuclear lamina. This Mus musculus (Mouse) protein is Torsin-1A-interacting protein 1 (Tor1aip1).